The sequence spans 603 residues: Laccase 1 (603 aa).

The N-terminal stretch at 1-20 (MSRFARLLLIVALFFTNAWA) is a signal peptide. 2 Plastocyanin-like domains span residues 66-108 (QRPI…IHIR) and 159-349 (LVVS…MRIP). Positions 90 and 92 each coordinate Cu cation. Residues Asn246, Asn269, Asn434, and Asn474 are each glycosylated (N-linked (GlcNAc...) asparagine). The Plastocyanin-like 3 domain occupies 460 to 588 (TRDTENDGLV…GGMGIAILDG (129 aa)). Positions 496, 499, and 501 each coordinate Cu cation. An N-linked (GlcNAc...) asparagine glycan is attached at Asn516. Cu cation contacts are provided by His570, Cys571, His572, and His576.

Belongs to the multicopper oxidase family. Requires Cu cation as cofactor.

Its subcellular location is the cell surface. It participates in pigment biosynthesis. Functionally, laccase; part of the Pks1 gene cluster that mediates the biosynthesis of an anthraquinone derivative pigment that contributes to conidial pigmentation that provides protection from UV radiation, heat and cold stress. The polyketide synthase Pks1 produces 1-acetyl-2,4,6,8-tetrahydroxy-9,10-anthraquinone though condensation of acetyl-CoA with malonyl-CoA. The dehydratase EthD and the laccase Mlac1 further convert the anthraquinone derivative into the final conidial pigment. The chain is Laccase 1 from Metarhizium anisopliae (Entomophthora anisopliae).